Reading from the N-terminus, the 337-residue chain is 2-ketoarginine methyltransferase (337 aa).

Belongs to the 2-ketoarginine methyltransferase family.

It carries out the reaction 5-guanidino-2-oxopentanoate + S-adenosyl-L-methionine = (3R)-5-guanidino-3-methyl-2-oxopentanoate + S-adenosyl-L-homocysteine + H(+). It participates in antibiotic biosynthesis. S-adenosyl-L-methionine-dependent methyltransferase involved in the formation of the rare amino acid 3-methylarginine (MeArg), which is incorporated into the peptidyl nucleoside antibiotic arginomycin. Transfers the methyl group from S-adenosyl-L-methionine into 5-guanidino-2-oxopentanoate acid to yield 5-guanidino-3-methyl-2-oxopentanoate, a precursor of MeArg. In Streptomyces arginensis, this protein is 2-ketoarginine methyltransferase.